Here is a 428-residue protein sequence, read N- to C-terminus: Glutamate-1-semialdehyde 2,1-aminomutase (428 aa).

The residue at position 265 (Lys-265) is an N6-(pyridoxal phosphate)lysine.

It belongs to the class-III pyridoxal-phosphate-dependent aminotransferase family. HemL subfamily. In terms of assembly, homodimer. Pyridoxal 5'-phosphate is required as a cofactor.

It localises to the cytoplasm. It catalyses the reaction (S)-4-amino-5-oxopentanoate = 5-aminolevulinate. The protein operates within porphyrin-containing compound metabolism; protoporphyrin-IX biosynthesis; 5-aminolevulinate from L-glutamyl-tRNA(Glu): step 2/2. The protein is Glutamate-1-semialdehyde 2,1-aminomutase of Legionella pneumophila (strain Paris).